Reading from the N-terminus, the 455-residue chain is tRNA-2-methylthio-N(6)-dimethylallyladenosine synthase (455 aa).

Residues 10-130 enclose the MTTase N-terminal domain; the sequence is RKVFIKTYGC…LPDALKRVRR (121 aa). Residues C19, C55, C93, C171, C175, and C178 each coordinate [4Fe-4S] cluster. Residues 157-389 form the Radical SAM core domain; that stretch reads RSRGVTAFLT…QALLLRQQKE (233 aa). Residues 392-454 enclose the TRAM domain; that stretch reads ESLVGKTMDV…PNSLFAEVAG (63 aa).

It belongs to the methylthiotransferase family. MiaB subfamily. In terms of assembly, monomer. The cofactor is [4Fe-4S] cluster.

The protein resides in the cytoplasm. It carries out the reaction N(6)-dimethylallyladenosine(37) in tRNA + (sulfur carrier)-SH + AH2 + 2 S-adenosyl-L-methionine = 2-methylsulfanyl-N(6)-dimethylallyladenosine(37) in tRNA + (sulfur carrier)-H + 5'-deoxyadenosine + L-methionine + A + S-adenosyl-L-homocysteine + 2 H(+). Catalyzes the methylthiolation of N6-(dimethylallyl)adenosine (i(6)A), leading to the formation of 2-methylthio-N6-(dimethylallyl)adenosine (ms(2)i(6)A) at position 37 in tRNAs that read codons beginning with uridine. This is tRNA-2-methylthio-N(6)-dimethylallyladenosine synthase from Agrobacterium fabrum (strain C58 / ATCC 33970) (Agrobacterium tumefaciens (strain C58)).